The following is a 54-amino-acid chain: Large ribosomal subunit protein bL33 (54 aa).

It belongs to the bacterial ribosomal protein bL33 family.

This is Large ribosomal subunit protein bL33 from Frankia alni (strain DSM 45986 / CECT 9034 / ACN14a).